A 342-amino-acid chain; its full sequence is P21 prophage-derived major head protein (342 aa).

Belongs to the lambda phage major capsid protein family.

The protein is P21 prophage-derived major head protein of Escherichia coli O6:H1 (strain CFT073 / ATCC 700928 / UPEC).